The following is a 263-amino-acid chain: Glucosamine-6-phosphate deaminase (263 aa).

Aspartate 67 serves as the catalytic Proton acceptor; for enolization step. Asparagine 136 serves as the catalytic For ring-opening step. Catalysis depends on histidine 138, which acts as the Proton acceptor; for ring-opening step. Residue glutamate 143 is the For ring-opening step of the active site.

It belongs to the glucosamine/galactosamine-6-phosphate isomerase family. NagB subfamily. Homohexamer.

It carries out the reaction alpha-D-glucosamine 6-phosphate + H2O = beta-D-fructose 6-phosphate + NH4(+). It participates in amino-sugar metabolism; N-acetylneuraminate degradation; D-fructose 6-phosphate from N-acetylneuraminate: step 5/5. Its function is as follows. Catalyzes the reversible isomerization-deamination of glucosamine 6-phosphate (GlcN6P) to form fructose 6-phosphate (Fru6P) and ammonium ion. The protein is Glucosamine-6-phosphate deaminase of Cellvibrio japonicus (strain Ueda107) (Pseudomonas fluorescens subsp. cellulosa).